We begin with the raw amino-acid sequence, 125 residues long: Small ribosomal subunit protein eS8 (125 aa).

It belongs to the eukaryotic ribosomal protein eS8 family. Part of the 30S ribosomal subunit.

This chain is Small ribosomal subunit protein eS8, found in Methanosphaerula palustris (strain ATCC BAA-1556 / DSM 19958 / E1-9c).